A 328-amino-acid chain; its full sequence is Cytochrome c biogenesis protein CcsA (328 aa).

A run of 8 helical transmembrane segments spans residues 13 to 33, 46 to 66, 73 to 93, 101 to 121, 146 to 166, 234 to 254, 263 to 283, and 295 to 315; these read ISFS…LVNL, GIVI…IYSG, LYES…ISYF, LNAI…SGLL, MILG…LLVI, IISL…VWAN, WDPK…FLHI, and AIVA…VNLL.

It belongs to the CcmF/CycK/Ccl1/NrfE/CcsA family. May interact with Ccs1.

The protein localises to the plastid. The protein resides in the chloroplast thylakoid membrane. Its function is as follows. Required during biogenesis of c-type cytochromes (cytochrome c6 and cytochrome f) at the step of heme attachment. This Arabis hirsuta (Hairy rock-cress) protein is Cytochrome c biogenesis protein CcsA.